The sequence spans 491 residues: Protein nucleotidyltransferase YdiU (491 aa).

Residues glycine 94, glycine 96, arginine 97, lysine 117, aspartate 129, glycine 130, arginine 180, and arginine 187 each contribute to the ATP site. Aspartate 256 serves as the catalytic Proton acceptor. Mg(2+)-binding residues include asparagine 257 and aspartate 266. Aspartate 266 contributes to the ATP binding site.

Belongs to the SELO family. Requires Mg(2+) as cofactor. Mn(2+) is required as a cofactor.

It carries out the reaction L-seryl-[protein] + ATP = 3-O-(5'-adenylyl)-L-seryl-[protein] + diphosphate. The catalysed reaction is L-threonyl-[protein] + ATP = 3-O-(5'-adenylyl)-L-threonyl-[protein] + diphosphate. The enzyme catalyses L-tyrosyl-[protein] + ATP = O-(5'-adenylyl)-L-tyrosyl-[protein] + diphosphate. It catalyses the reaction L-histidyl-[protein] + UTP = N(tele)-(5'-uridylyl)-L-histidyl-[protein] + diphosphate. It carries out the reaction L-seryl-[protein] + UTP = O-(5'-uridylyl)-L-seryl-[protein] + diphosphate. The catalysed reaction is L-tyrosyl-[protein] + UTP = O-(5'-uridylyl)-L-tyrosyl-[protein] + diphosphate. Functionally, nucleotidyltransferase involved in the post-translational modification of proteins. It can catalyze the addition of adenosine monophosphate (AMP) or uridine monophosphate (UMP) to a protein, resulting in modifications known as AMPylation and UMPylation. The protein is Protein nucleotidyltransferase YdiU of Brevibacillus brevis (strain 47 / JCM 6285 / NBRC 100599).